Consider the following 84-residue polypeptide: Kidney-associated antigen 1 (84 aa).

The disordered stretch occupies residues 31–84 (PGAAAAHLPRWPPPQLAASRREAPPLSQRPHRTQGAGSPPETNEKLTNPQVKEK). Positions 75-84 (KLTNPQVKEK) are enriched in polar residues.

Expressed in testis and kidney, and, at lower levels, in urinary bladder and liver. Expressed by a high proportion of tumors of various histologic origin, including melanomas, sarcomas and colorectal carcinomas.

This is Kidney-associated antigen 1 (KAAG1) from Homo sapiens (Human).